The following is a 366-amino-acid chain: MTVRNIASICNMGTNASALEKDIGPEQFPINEHYFGLVNFGNTCYCNSVLQALYFCRPFRENVLAYKAQQKKKENLLTCLADLFHSIATQKKKVGVIPPKKFISRLRKENDLFDNYMQQDAHEFLNYLLNTIADILQEEKKQEKQNGKLKNGNMNEPAENSKPELTWVHEIFQGTLTNETRCLNCETVSSKDEDFLDLSVDVEQNTSITHCLRDFSNTETLCSEQKYYCETCCSKQEAQKRMRVKKLPMILALHLKRFKYMEQLHRYTKLSYRVVFPLELRLFNTSSDAVNLDRMYDLVAVVVHCGSGPNRGHYITIVKSHGFWLLFDDDIVEKIDAQAIEEFYGLTSDISKNSESGYILFYQSRE.

Residues 35–365 (FGLVNFGNTC…SGYILFYQSR (331 aa)) enclose the USP domain. Residue cysteine 44 is the Nucleophile of the active site. Cysteine 182, cysteine 185, cysteine 229, and cysteine 232 together coordinate Zn(2+). The active-site Proton acceptor is histidine 313.

Belongs to the peptidase C19 family. USP12/USP46 subfamily. As to quaternary structure, interacts with WDR48. Interacts with WDR20. Interacts with DMWD. Component of the USP46/WDR20/WDR48 deubiquitinating complex. In terms of tissue distribution, detected in lung and spleen, and at lower levels in brain, kidney, testis and liver.

The protein resides in the cytoplasm. The catalysed reaction is Thiol-dependent hydrolysis of ester, thioester, amide, peptide and isopeptide bonds formed by the C-terminal Gly of ubiquitin (a 76-residue protein attached to proteins as an intracellular targeting signal).. In terms of biological role, deubiquitinating enzyme that plays a role in behavior, possibly by regulating GABA action. May act by mediating the deubiquitination of GAD1/GAD67. Has almost no deubiquitinating activity by itself and requires the interaction with WDR48 to have a high activity. Not involved in deubiquitination of monoubiquitinated FANCD2. This is Ubiquitin carboxyl-terminal hydrolase 46 from Rattus norvegicus (Rat).